A 164-amino-acid polypeptide reads, in one-letter code: UPF0304 protein Asuc_0543 (164 aa).

This sequence belongs to the UPF0304 family.

The protein is UPF0304 protein Asuc_0543 of Actinobacillus succinogenes (strain ATCC 55618 / DSM 22257 / CCUG 43843 / 130Z).